The sequence spans 932 residues: PMS1 protein homolog 1 (932 aa).

Residues 465 to 493 form a disordered region; it reads TQSENGNKDHIDESGENEEEAGLENSSEI. The segment at residues 571–639 is a DNA-binding region (HMG box); it reads IKKPMSASAL…RYNSQMKRAI (69 aa).

The protein belongs to the DNA mismatch repair MutL/HexB family. Component of the DNA mismatch repair (MMR) complex composed at least of MSH2, MSH3, MSH6, PMS1 and MLH1. The MutL-beta complex is a heterodimer of PMS1 and MLH1. Interacts with MCM9.

The protein resides in the nucleus. Probably involved in the repair of mismatches in DNA. The polypeptide is PMS1 protein homolog 1 (PMS1) (Homo sapiens (Human)).